The following is a 294-amino-acid chain: Probable 2-(5''-triphosphoribosyl)-3'-dephosphocoenzyme-A synthase (294 aa).

This sequence belongs to the CitG/MdcB family.

The enzyme catalyses 3'-dephospho-CoA + ATP = 2'-(5''-triphospho-alpha-D-ribosyl)-3'-dephospho-CoA + adenine. This is Probable 2-(5''-triphosphoribosyl)-3'-dephosphocoenzyme-A synthase from Streptococcus equi subsp. equi (strain 4047).